A 716-amino-acid chain; its full sequence is Mitochondrial Rho GTPase 1 (716 aa).

Topologically, residues M1–H692 are cytoplasmic. The Miro 1 domain occupies P3 to H224. The interval N58–N99 is disordered. GTP contacts are provided by residues E84–S91, D113–S115, and N167–D170. The 36-residue stretch at G240 to I275 folds into the EF-hand 1 domain. D253, D255, D257, Y259, and E264 together coordinate Ca(2+). The tract at residues T303–S327 is disordered. The 36-residue stretch at T388 to I423 folds into the EF-hand 2 domain. Residues D401, D403, D405, and E412 each contribute to the Ca(2+) site. A Miro 2 domain is found at R505–T671. GTP contacts are provided by residues G514–S521, E550–G554, and L620–D623. A helical; Anchor for type IV membrane protein membrane pass occupies residues I693–S713. Residues L714–R716 lie on the Mitochondrial intermembrane side of the membrane.

The protein belongs to the mitochondrial Rho GTPase family.

The protein resides in the mitochondrion outer membrane. In terms of biological role, mitochondrial GTPase involved in mitochondrial trafficking. Probably involved in control of anterograde transport of mitochondria and their subcellular distribution. In Candida albicans (strain SC5314 / ATCC MYA-2876) (Yeast), this protein is Mitochondrial Rho GTPase 1 (GEM1).